The primary structure comprises 573 residues: uncharacterized protein (573 aa).

2 disordered regions span residues 1–33 (MLQQGSSSRRSLHGNDFHTLTSPSRRDSLSIPR) and 60–101 (LVAN…SRYD). Positions 60–70 (LVANRSDNNGN) are enriched in polar residues. The N-linked (GlcNAc...) asparagine glycan is linked to N63. Over residues 84 to 95 (SSSTSSLPSTRN) the composition is skewed to low complexity. 10 tandem repeats follow at residues 102 to 103 (NM), 104 to 105 (NM), 106 to 107 (NM), 108 to 109 (NM), 110 to 111 (NM), 112 to 113 (NM), 114 to 115 (NM), 116 to 117 (NM), 118 to 119 (NM), and 120 to 121 (NM). Positions 102 to 121 (NMNMNMNMNMNMNMNMNMNM) are 10 X 2 AA tandem repeats of N-M. N123 carries an N-linked (GlcNAc...) asparagine glycan. Disordered regions lie at residues 150–174 (IPEKYSGSRYSLRSSPPTYSNPRVR), 192–271 (QFPN…IRSN), 286–317 (KSSNSADSVEENSKTKQKRKNPERVVPEPITS), and 357–379 (NNRIPVLPPPRSPNRPTLSDKRT). Polar residues predominate over residues 157–170 (SRYSLRSSPPTYSN). Residues 208–225 (LPPSSTFPDSPSSSSLPL) are compositionally biased toward low complexity. Positions 226–252 (TQTGGPSSADNDSIATGTNNRSPQQTK) are enriched in polar residues. N236 carries an N-linked (GlcNAc...) asparagine glycan. Residues N437 and N442 are each glycosylated (N-linked (GlcNAc...) asparagine). Composition is skewed to low complexity over residues 441-457 (INSSISSPAPSSSSSSS) and 466-483 (SISSSPTPAPSSGSSKSK). The tract at residues 441 to 483 (INSSISSPAPSSSSSSSLVSRGPMQSISSSPTPAPSSGSSKSK) is disordered. N-linked (GlcNAc...) asparagine glycosylation is found at N498, N535, and N541.

It to yeast AFR1. In terms of processing, N-glycosylated.

This is an uncharacterized protein from Saccharomyces cerevisiae (strain ATCC 204508 / S288c) (Baker's yeast).